Consider the following 149-residue polypeptide: NPC intracellular cholesterol transporter 2 (149 aa).

The N-terminal stretch at 1 to 19 is a signal peptide; it reads MRFLTVAFLFLALSASALA. 3 cysteine pairs are disulfide-bonded: cysteine 27–cysteine 140, cysteine 42–cysteine 47, and cysteine 93–cysteine 99. An N-linked (GlcNAc...) asparagine glycan is attached at asparagine 58. N6-acetyllysine is present on lysine 116.

It belongs to the NPC2 family. In terms of assembly, interacts with NPC1 (via the second lumenal domain) in a cholestrol-dependent manner. Interacts with NUS1/NgBR, the interaction stabilizes NCP2 and regulates cholesterol trafficking. Interacts with DHDDS. Interacts with NEDD4L (via C2 domain). Interacts with NPC1L1. Expressed in kidney, spleen, liver and mammary gland, but not in testis.

Its subcellular location is the secreted. It localises to the endoplasmic reticulum. It is found in the lysosome. The catalysed reaction is cholesterol(in) = cholesterol(out). Functionally, intracellular cholesterol transporter which acts in concert with NPC1 and plays an important role in the egress of cholesterol from the lysosomal compartment. Unesterified cholesterol that has been released from LDLs in the lumen of the late endosomes/lysosomes is transferred by NPC2 to the cholesterol-binding pocket in the N-terminal domain of NPC1. May bind and mobilize cholesterol that is associated with membranes. NPC2 binds cholesterol with a 1:1 stoichiometry. Can bind a variety of sterols, including lathosterol, desmosterol and the plant sterols stigmasterol and beta-sitosterol. The secreted form of NCP2 regulates biliary cholesterol secretion via stimulation of ABCG5/ABCG8-mediated cholesterol transport. In Bos taurus (Bovine), this protein is NPC intracellular cholesterol transporter 2.